Consider the following 149-residue polypeptide: Flagellar assembly factor FliW (149 aa).

Belongs to the FliW family. In terms of assembly, interacts with translational regulator CsrA and flagellin(s).

It is found in the cytoplasm. In terms of biological role, acts as an anti-CsrA protein, binds CsrA and prevents it from repressing translation of its target genes, one of which is flagellin. Binds to flagellin and participates in the assembly of the flagellum. In Thermotoga maritima (strain ATCC 43589 / DSM 3109 / JCM 10099 / NBRC 100826 / MSB8), this protein is Flagellar assembly factor FliW.